Reading from the N-terminus, the 161-residue chain is Myosin regulatory light chain (161 aa).

Phosphoserine is present on residues S13 and S14. 3 EF-hand domains span residues 20 to 55 (EQVA…FGVF), 56 to 91 (VMED…RMKQ), and 93 to 128 (SNEQ…LGDK).

Myosin is a hexamer of 2 heavy chains and 4 light chains (two regulatory light chains and two essential light chains).

In Dictyostelium discoideum (Social amoeba), this protein is Myosin regulatory light chain (mlcR).